The sequence spans 75 residues: MHAKIEIEIEEEKDGSLILKYNGMKIGDLNDVNPADELRLVNELIKVREKEMSTSDINKEIEHRLAKLLAWYYTE.

This is an uncharacterized protein from Acidianus filamentous virus 1 (isolate United States/Yellowstone) (AFV-1).